We begin with the raw amino-acid sequence, 94 residues long: Putative toxin RelE4 (94 aa).

The protein belongs to the RelE toxin family.

Its function is as follows. Toxic component of a type II toxin-antitoxin (TA) system. Its cognate antitoxin is RelB4 (Potential). This chain is Putative toxin RelE4 (relE4), found in Methanocaldococcus jannaschii (strain ATCC 43067 / DSM 2661 / JAL-1 / JCM 10045 / NBRC 100440) (Methanococcus jannaschii).